We begin with the raw amino-acid sequence, 260 residues long: UPF0246 protein APP7_0648 (260 aa).

Belongs to the UPF0246 family.

The sequence is that of UPF0246 protein APP7_0648 from Actinobacillus pleuropneumoniae serotype 7 (strain AP76).